The sequence spans 609 residues: Snake venom metalloproteinase-disintegrin-like mocarhagin (609 aa).

The signal sequence occupies residues 1–20 (MIQALLVAICLAVFPYQGSS). A propeptide spanning residues 21 to 191 (IILESGNVND…DEPIEKSSQL (171 aa)) is cleaved from the precursor. The Peptidase M12B domain maps to 205–400 (KYIEFYVVVD…DRPQCILNKP (196 aa)). Ca(2+)-binding residues include Glu-208 and Asp-292. Asn-303 carries N-linked (GlcNAc...) asparagine glycosylation. 3 disulfides stabilise this stretch: Cys-316/Cys-395, Cys-356/Cys-379, and Cys-358/Cys-363. His-341 and His-345 together coordinate Zn(2+). 8 residues coordinate Ca(2+): Cys-395, Asn-398, Val-410, Asn-413, Phe-415, Glu-417, Glu-420, and Asp-423. In terms of domain architecture, Disintegrin spans 408–494 (PPVCGNYFVE…KCPKDSFQRN (87 aa)). Disulfide bonds link Cys-411–Cys-440, Cys-422–Cys-435, Cys-424–Cys-430, Cys-434–Cys-457, Cys-448–Cys-454, Cys-453–Cys-479, Cys-466–Cys-486, Cys-473–Cys-505, Cys-498–Cys-510, Cys-517–Cys-567, Cys-532–Cys-575, Cys-545–Cys-555, Cys-562–Cys-601, and Cys-595–Cys-606. Residues 472 to 474 (DCD) carry the D/ECD-tripeptide motif. A glycan (N-linked (GlcNAc...) asparagine) is linked at Asn-507.

This sequence belongs to the venom metalloproteinase (M12B) family. P-III subfamily. P-IIIa sub-subfamily. Monomer. Requires Zn(2+) as cofactor. Expressed by the venom gland.

Its subcellular location is the secreted. Inhibited by EDTA and diisopropyl fluorophosphate (DFP). Also inhibited by an excess of zinc or calcium ions. Snake venom zinc metalloproteinase that inhibits platelet aggregation by cleaving platelet glycoprotein Ib alpha (GP1BA) at Glu-298/Asp-299, and abolishes binding of von Willebrand factor (VWF) to GPIBA. Cleaves P-selectin glycoprotein ligand-1 (PSGL-1/SELPLG) at Tyr-51/Asp-52, and completely abolishes the binding of PSGL-1 to P-selectin. Anionic amino acid sequences containing sulfated tyrosines are needed for cleavages. Inhibits the thrombin-induced platelet aggregation, and the thrombin-induced release of ATP and ADP. Has lectin activity (inhibited by heparin). The polypeptide is Snake venom metalloproteinase-disintegrin-like mocarhagin (Naja mossambica (Mozambique spitting cobra)).